A 285-amino-acid chain; its full sequence is NADPH-dependent 7-cyano-7-deazaguanine reductase (285 aa).

91–93 is a binding site for substrate; that stretch reads IES. 93–94 serves as a coordination point for NADPH; sequence SK. The Thioimide intermediate role is filled by Cys-193. Asp-200 (proton donor) is an active-site residue. 232-233 provides a ligand contact to substrate; the sequence is HE. An NADPH-binding site is contributed by 261 to 262; it reads RG.

The protein belongs to the GTP cyclohydrolase I family. QueF type 2 subfamily. Homodimer.

The protein localises to the cytoplasm. The enzyme catalyses 7-aminomethyl-7-carbaguanine + 2 NADP(+) = 7-cyano-7-deazaguanine + 2 NADPH + 3 H(+). It participates in tRNA modification; tRNA-queuosine biosynthesis. Functionally, catalyzes the NADPH-dependent reduction of 7-cyano-7-deazaguanine (preQ0) to 7-aminomethyl-7-deazaguanine (preQ1). The sequence is that of NADPH-dependent 7-cyano-7-deazaguanine reductase from Shewanella frigidimarina (strain NCIMB 400).